A 1804-amino-acid polypeptide reads, in one-letter code: Collagen alpha-1(XI) chain (1804 aa).

The N-terminal stretch at 1-34 is a signal peptide; that stretch reads MEPWSRWKTKRWIWDLTISTLVLTFLFQAREVRG. A propeptide spans 35-511 (N-terminal propeptide); the sequence is AAPVDILKAL…SKGPTISAQE (477 aa). 2 cysteine pairs are disulfide-bonded: Cys-60–Cys-242 and Cys-181–Cys-235. Positions 70–242 constitute a Laminin G-like domain; sequence DIAYRVTEEA…DYCDHYSPDC (173 aa). Residues 229 to 417 are nonhelical region; the sequence is KAAYDYCDHY…DFTETSINGH (189 aa). Asn-351 carries N-linked (GlcNAc...) asparagine glycosylation. The triple-helical region (interrupted) stretch occupies residues 418-506; that stretch reads GAYGEKGQKG…YGGDGSKGPT (89 aa). Positions 437-506 are disordered; it reads LVEGPPGPAG…YGGDGSKGPT (70 aa). Residues 440 to 488 enclose the Collagen-like 1 domain; sequence GPPGPAGPAGLMGPPGLQGPSGLPGDPGDRGPPGRPGLPGADGLPGPPG. 2 stretches are compositionally biased toward low complexity: residues 447–465 and 477–494; these read PAGLMGPPGLQGPSGLPGD and LPGADGLPGPPGTMLMLP. The tract at residues 507-509 is short nonhelical segment; that stretch reads ISA. A telopeptide region spans residues 510–527; it reads QEAQAQAILQQARIALRG. Positions 526-1560 are disordered; the sequence is RGPPGPMGLT…KTRRHTESIQ (1035 aa). Residues 528 to 1540 form a triple-helical region region; it reads PPGPMGLTGR…PGPPGPPGEV (1013 aa). Collagen-like domains follow at residues 530 to 584, 581 to 639, 607 to 664, and 641 to 698; these read GPMG…GADG, GADG…EIGP, PGDK…PGQP, and GLPG…GPQG. Gly residues-rich tracts occupy residues 539–548 and 581–590; these read GPVGGPGSAG and GADGGRGMPG. Position 610 is an allysine (Lys-610). The segment covering 639-655 has biased composition (low complexity); it reads PRGLPGEAGPRGLLGPR. The segment covering 697 to 708 has biased composition (pro residues); it reads QGLPGPQGPIGP. Residues 715–726 are compositionally biased toward low complexity; the sequence is QGKPGLAGLPGA. The 59-residue stretch at 746-804 folds into the Collagen-like 6 domain; it reads GPPGPQGPIGYPGPRGVKGADGVRGLKGSKGEKGEDGFPGFKGDMGLKGDRGEVGQVGP. Over residues 805–814 the composition is skewed to basic and acidic residues; sequence RGEDGPEGPK. 3 stretches are compositionally biased toward low complexity: residues 873–901, 916–925, and 969–979; these read KPGPRGQRGPTGPRGSRGARGPTGKPGPK, RGPQGPQGPV, and PQGPTGETGPI. Positions 1040-1049 are enriched in gly residues; sequence GLKGGEGPQG. Pro residues predominate over residues 1074-1083; it reads RPGPQGPPGP. Residues 1084 to 1108 show a composition bias toward low complexity; it reads AGEKGAPGEKGPQGPAGRDGVQGPV. Residues 1160 to 1169 are compositionally biased toward gly residues; the sequence is GIAGGDGEAG. Composition is skewed to pro residues over residues 1216–1227 and 1341–1360; these read MGPPGPPGPRGP and QPGPPGPSGEAGPPGPPGKR. 2 stretches are compositionally biased toward low complexity: residues 1383 to 1392 and 1417 to 1426; these read AEGPPGKTGP and QGLPGAAGQD. Collagen-like domains are found at residues 1391 to 1449, 1442 to 1492, and 1481 to 1539; these read GPVG…SKGE, GDPG…PGPA, and GAKG…PPGE. A compositionally biased stretch (pro residues) spans 1428–1437; sequence PPGPLGPPGL. Allysine is present on Lys-1450. Low complexity predominate over residues 1453–1462; sequence PGLIGLIGPP. A compositionally biased stretch (gly residues) spans 1481–1490; sequence GAKGDGGIPG. Positions 1491–1507 are enriched in pro residues; sequence PAGPIGPPGPPGLPGPA. A compositionally biased stretch (low complexity) spans 1509-1519; the sequence is PKGNKGSSGPT. Residues 1528–1537 show a composition bias toward pro residues; that stretch reads PGPPGPPGPP. Positions 1541 to 1561 are nonhelical region (C-terminal); that stretch reads IQPLPILSPKKTRRHTESIQA. A propeptide spans 1562-1804 (C-terminal propeptide); that stretch reads DAGDNILDYS…FEVGPACFLG (243 aa). Residues 1575–1803 form the Fibrillar collagen NC1 domain; it reads EEIFGSLNSL…GFEVGPACFL (229 aa). A disulfide bridge links Cys-1605 with Cys-1637. Ca(2+) contacts are provided by Asp-1623, Asn-1625, Gln-1626, Cys-1628, and Asp-1631. Residues Asn-1638 and Asn-1707 are each glycosylated (N-linked (GlcNAc...) asparagine). Disulfide bonds link Cys-1646–Cys-1801 and Cys-1712–Cys-1755.

This sequence belongs to the fibrillar collagen family. Trimers composed of three different chains: alpha 1(XI), alpha 2(XI), and alpha 3(XI). Alpha 3(XI) is probably a post-translational modification of alpha 1(II). Prolines at the third position of the tripeptide repeating unit (G-X-Y) are hydroxylated in some or all of the chains. In terms of processing, N-glycosylated.

It localises to the secreted. The protein resides in the extracellular space. It is found in the extracellular matrix. May play an important role in fibrillogenesis by controlling lateral growth of collagen II fibrils. In Rattus norvegicus (Rat), this protein is Collagen alpha-1(XI) chain (Col11a1).